The primary structure comprises 476 residues: ATP synthase subunit beta, chloroplastic (476 aa).

153–160 (GGAGVGKT) serves as a coordination point for ATP.

This sequence belongs to the ATPase alpha/beta chains family. As to quaternary structure, F-type ATPases have 2 components, CF(1) - the catalytic core - and CF(0) - the membrane proton channel. CF(1) has five subunits: alpha(3), beta(3), gamma(1), delta(1), epsilon(1). CF(0) has four main subunits: a(1), b(1), b'(1) and c(9-12).

Its subcellular location is the plastid. It is found in the chloroplast thylakoid membrane. It carries out the reaction ATP + H2O + 4 H(+)(in) = ADP + phosphate + 5 H(+)(out). Produces ATP from ADP in the presence of a proton gradient across the membrane. The catalytic sites are hosted primarily by the beta subunits. The polypeptide is ATP synthase subunit beta, chloroplastic (Dicksonia antarctica (Australian tree fern)).